A 332-amino-acid polypeptide reads, in one-letter code: Polyprenyl transferase yanG (332 aa).

The next 8 helical transmembrane spans lie at 42 to 62 (IWGA…LAFA), 72 to 92 (VTAT…FFVV), 145 to 165 (PAVT…PFMK), 170 to 190 (FPQV…WVGV), 200 to 220 (ALPL…FYAT), 242 to 262 (VKIL…MTAL), 266 to 286 (LSLI…PWHV), and 300 to 320 (VFKA…LELV).

It belongs to the UbiA prenyltransferase family. Requires Mg(2+) as cofactor.

The protein localises to the membrane. It functions in the pathway secondary metabolite biosynthesis; terpenoid biosynthesis. Functionally, polyprenyl transferase; part of the gene cluster that mediates the biosynthesis of yanuthone D, a fungal isoprenoid epoxycyclohexenone that acts as an antibiotic against fungi and bacteria. The first step of the pathway is the synthesis of 6-methylsalicylic acid (6-MSA) by the polyketide synthase yanA. 6-MSA is then converted to m-cresol by the decarboxylase yanB. The cytochrome P450 monooxygenase yanC then catalyzes the oxidation of m-cresol to toluquinol. Epoxidation of toluquinol is then performed by the short chain dehydrogenase yanD, with the help of yanE, and a further prenylation by yanG leads to 7-deacetoxyyanuthone A. The next step is the hydroxylation of C-22 of 7-deacetoxyyanuthone A by the cytochrome P450 monooxygenase yanH to yield 22-deacetylyanuthone A. O-Mevalon transferase yanI then attaches mevalon to the hydroxyl group of 22-deacetylyanuthone A to produce yanuthone E. Finally, the FAD-dependent monooxygenase yanF oxidizes the hydroxyl group at C15 of yanuthone E to form yanuthone D. Furthermore, several branching points in the pathway lead to the production of yanuthones F and G from 7-deacetoxyyanuthone A; yanuthones H and I from 22-deacetylyanuthone A; and yanuthone J from yanuthone E. YanG is also involved in the synthesis of yanuthone X1 which does not have 6-methylsalicylic acid (6-MSA) as precursor. The chain is Polyprenyl transferase yanG from Aspergillus niger (strain ATCC 1015 / CBS 113.46 / FGSC A1144 / LSHB Ac4 / NCTC 3858a / NRRL 328 / USDA 3528.7).